A 185-amino-acid polypeptide reads, in one-letter code: Transcription termination/antitermination protein NusG (185 aa).

One can recognise a KOW domain in the interval 134–163; it reads VGQQVRIVEGPFATFSGEVEEVMSERNKVR.

The protein belongs to the NusG family.

In terms of biological role, participates in transcription elongation, termination and antitermination. This is Transcription termination/antitermination protein NusG from Treponema pallidum (strain Nichols).